Consider the following 562-residue polypeptide: Dihydroxy-acid dehydratase (562 aa).

Asp80 is a binding site for Mg(2+). Cys121 provides a ligand contact to [2Fe-2S] cluster. Mg(2+) contacts are provided by Asp122 and Lys123. At Lys123 the chain carries N6-carboxylysine. Cys194 lines the [2Fe-2S] cluster pocket. Glu446 lines the Mg(2+) pocket. Residue Ser472 is the Proton acceptor of the active site.

The protein belongs to the IlvD/Edd family. As to quaternary structure, homodimer. [2Fe-2S] cluster serves as cofactor. It depends on Mg(2+) as a cofactor.

The enzyme catalyses (2R)-2,3-dihydroxy-3-methylbutanoate = 3-methyl-2-oxobutanoate + H2O. The catalysed reaction is (2R,3R)-2,3-dihydroxy-3-methylpentanoate = (S)-3-methyl-2-oxopentanoate + H2O. The protein operates within amino-acid biosynthesis; L-isoleucine biosynthesis; L-isoleucine from 2-oxobutanoate: step 3/4. Its pathway is amino-acid biosynthesis; L-valine biosynthesis; L-valine from pyruvate: step 3/4. Its function is as follows. Functions in the biosynthesis of branched-chain amino acids. Catalyzes the dehydration of (2R,3R)-2,3-dihydroxy-3-methylpentanoate (2,3-dihydroxy-3-methylvalerate) into 2-oxo-3-methylpentanoate (2-oxo-3-methylvalerate) and of (2R)-2,3-dihydroxy-3-methylbutanoate (2,3-dihydroxyisovalerate) into 2-oxo-3-methylbutanoate (2-oxoisovalerate), the penultimate precursor to L-isoleucine and L-valine, respectively. The polypeptide is Dihydroxy-acid dehydratase (Staphylococcus aureus (strain USA300 / TCH1516)).